The chain runs to 212 residues: Leucine efflux protein (212 aa).

6 helical membrane passes run Thr-12–Leu-32, Gly-49–Ile-69, Thr-71–Gly-91, Ile-122–Ile-142, Phe-153–Ile-173, and Leu-188–Ala-208.

It belongs to the Rht family.

The protein localises to the cell inner membrane. It catalyses the reaction L-leucine(in) + H(+)(out) = L-leucine(out) + H(+)(in). Exporter of leucine. The protein is Leucine efflux protein (leuE) of Escherichia coli O157:H7.